Reading from the N-terminus, the 299-residue chain is Protease HtpX homolog (299 aa).

The next 2 helical transmembrane spans lie at 15-35 (ILLL…GYLF) and 39-59 (GLGG…SMIF). H143 is a binding site for Zn(2+). E144 is a catalytic residue. Zn(2+) is bound at residue H147. Transmembrane regions (helical) follow at residues 158-178 (IAVA…RMMW) and 198-218 (IIML…ATLV). E227 contributes to the Zn(2+) binding site.

This sequence belongs to the peptidase M48B family. Zn(2+) serves as cofactor.

It is found in the cell membrane. The polypeptide is Protease HtpX homolog (Streptococcus pneumoniae serotype 19F (strain G54)).